Consider the following 127-residue polypeptide: Major sperm protein 152 (127 aa).

Position 2 is an N-acetylthreonine (Thr2). The region spanning 9 to 126 (DIQTQPGTKI…RRKNLPIEYN (118 aa)) is the MSP domain.

In terms of tissue distribution, sperm.

It localises to the cell projection. Its subcellular location is the pseudopodium. The protein localises to the cytoplasm. It is found in the cytoskeleton. Functionally, central component in molecular interactions underlying sperm crawling. Forms an extensive filament system that extends from sperm villipoda, along the leading edge of the pseudopod. This Caenorhabditis elegans protein is Major sperm protein 152 (msp-152).